The primary structure comprises 621 residues: tRNA uridine 5-carboxymethylaminomethyl modification enzyme MnmG (621 aa).

11–16 is an FAD binding site; sequence GAGHAG. An NAD(+)-binding site is contributed by 271 to 285; sequence GPRYCPSVEDKINRF.

Belongs to the MnmG family. Homodimer. Heterotetramer of two MnmE and two MnmG subunits. The cofactor is FAD.

Its subcellular location is the cytoplasm. Functionally, NAD-binding protein involved in the addition of a carboxymethylaminomethyl (cmnm) group at the wobble position (U34) of certain tRNAs, forming tRNA-cmnm(5)s(2)U34. This is tRNA uridine 5-carboxymethylaminomethyl modification enzyme MnmG from Cytophaga hutchinsonii (strain ATCC 33406 / DSM 1761 / CIP 103989 / NBRC 15051 / NCIMB 9469 / D465).